Here is a 91-residue protein sequence, read N- to C-terminus: Small ribosomal subunit protein uS19 (91 aa).

This sequence belongs to the universal ribosomal protein uS19 family.

Protein S19 forms a complex with S13 that binds strongly to the 16S ribosomal RNA. In Metamycoplasma arthritidis (strain 158L3-1) (Mycoplasma arthritidis), this protein is Small ribosomal subunit protein uS19.